The primary structure comprises 802 residues: MGHPPLEFSDCYLDSPDFRERLKCYEQELERTNKFIKDVIKDGNALISAMRNYSSAVQKFSQTLQSFQFDFIGDTLTDDEINIAESFKEFAELLNEVENERMMMVHNASDLLIKPLENFRKEQIGFTKERKKKFEKDGERFYSLLDRHLHLSSKKKESQLQEADLQVDKERHNFFESSLDYVYQIQEVQESKKFNIVEPVLAFLHSLFISNSLTVELTQDFLPYKQQLQLSLQNTRNHFSSTREEMEELKKRMKEAPQTCKLPGQPTIEGYLYTQEKWALGISWVKYYCQYEKETKTLTMTPMEQKPGAKQGPLDLTLKYCVRRKTESIDKRFCFDIETNERPGTITLQALSEANRRLWMEAMDGKEPIYHSPITKQQEMELNEVGFKFVRKCINIIETKGIKTEGLYRTVGSNIQVQKLLNAFFDPKCPGDVDFHNSDWDIKTITSSLKFYLRNLSEPVMTYRLHKELVSAAKSDNLDYRLGAIHSLVYKLPEKNREMLELLIRHLVNVCEHSKENLMTPSNMGVIFGPTLMRAQEDTVAAMMNIKFQNIVVEILIEHFGKIYLGPPEESAAPPVPPPRVTARRHKPITISKRLLRERTVFYTSSLDESEDEIQHQTPNGTITSSIEPPKPPQHPKLPIQRSGETDPGRKSPSRPILDGKLEPCPEVDVGKLVSRLQDGGTKITPKATNGPMPGSGPTKTPSFHIKRPAPRPLAHHKEGDADSFSKVRPPGEKPTIIRPPVRPPDPPCRAATPQKPEPKPDIVAGNAGEITSSVVASRTRFFETASRKTGSSQGRLPGDES.

Residues Gln-265–Pro-368 form the PH domain. Residues Met-380–Tyr-564 form the Rho-GAP domain. Disordered regions lie at residues Glu-569–Pro-588, Leu-607–Pro-666, Gly-680–Glu-770, and Phe-783–Ser-802. Positions His-616–Ile-627 are enriched in polar residues. Residues His-716–Gly-732 are compositionally biased toward basic and acidic residues.

As to quaternary structure, interacts with HOMER1. Interacts with AMPA receptor complexes. Interacts with SH3GL2 (endophilin-A1). Interacts (via C-terminus) with NR1D1. As to expression, expressed in brain.

Its subcellular location is the postsynapse. The protein resides in the presynapse. It localises to the cell projection. It is found in the axon. The protein localises to the dendritic spine. Its subcellular location is the dendrite. The protein resides in the cytoplasm. In terms of biological role, stimulates GTP hydrolysis of members of the Rho family. Its action on RHOA activity and signaling is implicated in growth and stabilization of dendritic spines, and therefore in synaptic function. Critical for the stabilization of AMPA receptors at postsynaptic sites. Critical for the regulation of synaptic vesicle endocytosis at presynaptic terminals. Required for the localization of NR1D1 to dendrites, can suppress its repressor activity and protect it from proteasomal degradation. This Homo sapiens (Human) protein is Oligophrenin-1 (OPHN1).